The primary structure comprises 337 residues: Alanine racemase (337 aa).

Lysine 33 acts as the Proton acceptor; specific for D-alanine in catalysis. At lysine 33 the chain carries N6-(pyridoxal phosphate)lysine. Arginine 118 is a binding site for substrate. Tyrosine 246 serves as the catalytic Proton acceptor; specific for L-alanine. Residue methionine 292 coordinates substrate.

It belongs to the alanine racemase family. It depends on pyridoxal 5'-phosphate as a cofactor.

It carries out the reaction L-alanine = D-alanine. Its pathway is amino-acid biosynthesis; D-alanine biosynthesis; D-alanine from L-alanine: step 1/1. Catalyzes the interconversion of L-alanine and D-alanine. May also act on other amino acids. The polypeptide is Alanine racemase (alr) (Campylobacter concisus (strain 13826)).